Reading from the N-terminus, the 253-residue chain is Cyclin-C1-1 (253 aa).

This sequence belongs to the cyclin family. Cyclin C subfamily.

The sequence is that of Cyclin-C1-1 (CYCC1-1) from Arabidopsis thaliana (Mouse-ear cress).